Here is an 873-residue protein sequence, read N- to C-terminus: Leucine--tRNA ligase (873 aa).

The 'HIGH' region motif lies at 42-52; that stretch reads PYPSGKLHMGH. A disordered region spans residues 624 to 643; it reads PVEIGGTEKMSKSKNNGVDP. The 'KMSKS' region motif lies at 632 to 636; that stretch reads KMSKS. Residue lysine 635 coordinates ATP.

The protein belongs to the class-I aminoacyl-tRNA synthetase family.

Its subcellular location is the cytoplasm. It catalyses the reaction tRNA(Leu) + L-leucine + ATP = L-leucyl-tRNA(Leu) + AMP + diphosphate. The protein is Leucine--tRNA ligase of Pseudomonas paraeruginosa (strain DSM 24068 / PA7) (Pseudomonas aeruginosa (strain PA7)).